The following is a 458-amino-acid chain: tRNA modification GTPase MnmE (458 aa).

(6S)-5-formyl-5,6,7,8-tetrahydrofolate-binding residues include R26, E88, and R127. One can recognise a TrmE-type G domain in the interval 224-378 (GLSTAIIGRP…IEDRINQLFF (155 aa)). N234 serves as a coordination point for K(+). GTP contacts are provided by residues 234 to 239 (NVGKSS), 253 to 259 (TDIAGTT), and 278 to 281 (DTAG). S238 is a binding site for Mg(2+). 3 residues coordinate K(+): T253, I255, and T258. T259 provides a ligand contact to Mg(2+). Position 458 (K458) interacts with (6S)-5-formyl-5,6,7,8-tetrahydrofolate.

Belongs to the TRAFAC class TrmE-Era-EngA-EngB-Septin-like GTPase superfamily. TrmE GTPase family. In terms of assembly, homodimer. Heterotetramer of two MnmE and two MnmG subunits. The cofactor is K(+).

Its subcellular location is the cytoplasm. Its function is as follows. Exhibits a very high intrinsic GTPase hydrolysis rate. Involved in the addition of a carboxymethylaminomethyl (cmnm) group at the wobble position (U34) of certain tRNAs, forming tRNA-cmnm(5)s(2)U34. The polypeptide is tRNA modification GTPase MnmE (Streptococcus pyogenes serotype M4 (strain MGAS10750)).